Consider the following 117-residue polypeptide: Large ribosomal subunit protein bL20 (117 aa).

It belongs to the bacterial ribosomal protein bL20 family.

Its function is as follows. Binds directly to 23S ribosomal RNA and is necessary for the in vitro assembly process of the 50S ribosomal subunit. It is not involved in the protein synthesizing functions of that subunit. The polypeptide is Large ribosomal subunit protein bL20 (Chromohalobacter salexigens (strain ATCC BAA-138 / DSM 3043 / CIP 106854 / NCIMB 13768 / 1H11)).